Consider the following 276-residue polypeptide: NH(3)-dependent NAD(+) synthetase (276 aa).

39–46 (GLSGGVDS) is an ATP binding site. Asp-45 is a Mg(2+) binding site. Arg-123 contributes to the deamido-NAD(+) binding site. Thr-143 contributes to the ATP binding site. A Mg(2+)-binding site is contributed by Glu-148. Deamido-NAD(+) contacts are provided by Lys-156 and Asp-163. ATP is bound by residues Lys-172 and Ser-194. 254-255 (HK) contacts deamido-NAD(+).

Belongs to the NAD synthetase family. In terms of assembly, homodimer.

The catalysed reaction is deamido-NAD(+) + NH4(+) + ATP = AMP + diphosphate + NAD(+) + H(+). It participates in cofactor biosynthesis; NAD(+) biosynthesis; NAD(+) from deamido-NAD(+) (ammonia route): step 1/1. In terms of biological role, catalyzes the ATP-dependent amidation of deamido-NAD to form NAD. Uses ammonia as a nitrogen source. In Hyperthermus butylicus (strain DSM 5456 / JCM 9403 / PLM1-5), this protein is NH(3)-dependent NAD(+) synthetase.